Here is a 473-residue protein sequence, read N- to C-terminus: Photosystem II CP43 reaction center protein (473 aa).

Residues 1–14 (MKTLYSLRRFYHVE) constitute a propeptide that is removed on maturation. Threonine 15 carries the N-acetylthreonine modification. Threonine 15 bears the Phosphothreonine mark. Transmembrane regions (helical) follow at residues 69–93 (LFEVAHFVPEKPMYEQGLILLPHLA), 134–155 (LLGPETLEESFPFFGYVWKDRN), 178–200 (KALYFGGVYDTWAPGGGDVRKIT), 255–275 (KPFAWARRALVWSGEAYLSYS), and 291–312 (WFNNTAYPSEFYGPTGPEASQA). Glutamate 367 contacts [CaMn4O5] cluster. The chain crosses the membrane as a helical span at residues 447-471 (RARAAAAGFEKGIDRDFEPVLSMTP).

This sequence belongs to the PsbB/PsbC family. PsbC subfamily. PSII is composed of 1 copy each of membrane proteins PsbA, PsbB, PsbC, PsbD, PsbE, PsbF, PsbH, PsbI, PsbJ, PsbK, PsbL, PsbM, PsbT, PsbX, PsbY, PsbZ, Psb30/Ycf12, at least 3 peripheral proteins of the oxygen-evolving complex and a large number of cofactors. It forms dimeric complexes. It depends on Binds multiple chlorophylls and provides some of the ligands for the Ca-4Mn-5O cluster of the oxygen-evolving complex. It may also provide a ligand for a Cl- that is required for oxygen evolution. PSII binds additional chlorophylls, carotenoids and specific lipids. as a cofactor.

It is found in the plastid. It localises to the chloroplast thylakoid membrane. Its function is as follows. One of the components of the core complex of photosystem II (PSII). It binds chlorophyll and helps catalyze the primary light-induced photochemical processes of PSII. PSII is a light-driven water:plastoquinone oxidoreductase, using light energy to abstract electrons from H(2)O, generating O(2) and a proton gradient subsequently used for ATP formation. The sequence is that of Photosystem II CP43 reaction center protein from Crucihimalaya wallichii (Rock-cress).